Reading from the N-terminus, the 717-residue chain is F-box only protein 42 (717 aa).

The segment covering 1 to 30 (MASSSDSEDDSVMAVDQEETALEGTMEQDE) has biased composition (acidic residues). The interval 1-34 (MASSSDSEDDSVMAVDQEETALEGTMEQDEDPHP) is disordered. An F-box domain is found at 44-93 (NRSMSELPEEVLEYILSFLSPYQEHKTAALVCKQWYRLIKGVAHQCYHGF). Kelch repeat units lie at residues 132 to 184 (SMYV…VYKD), 186 to 242 (LVLF…VIGD), 244 to 293 (MIVF…VIDD), and 295 to 342 (TLLI…LWCH). The segment at 361–452 (RAPLSPSLNS…NLSPGTVAVG (92 aa)) is disordered. Positions 363 to 376 (PLSPSLNSRPSPIS) are enriched in low complexity. Residues serine 365 and serine 373 each carry the phosphoserine modification. Position 378 is a phosphothreonine (threonine 378). The segment covering 416–426 (QRQTPSGSREG) has biased composition (polar residues). Serine 552 bears the Phosphoserine mark. Residues 570–595 (GPSASAALSPPLGSSPSSPGSQSLSS) show a composition bias toward low complexity. The interval 570–632 (GPSASAALSP…HHPPQSLNVG (63 aa)) is disordered.

In terms of assembly, component of some SCF complex, composed of CUL1, SKP1, RBX1 and FBXO42. Interacts (via the kelch domain) with p53/TP53; interaction is direct.

Functionally, substrate-recognition component of some SCF (SKP1-CUL1-F-box protein)-type E3 ubiquitin ligase complex. Specifically recognizes p53/TP53, promoting its ubiquitination and degradation. The chain is F-box only protein 42 (Fbxo42) from Mus musculus (Mouse).